The following is a 324-amino-acid chain: AT-hook motif nuclear-localized protein 24 (324 aa).

Residues 1 to 12 are compositionally biased toward polar residues; that stretch reads MDPVQSHGSQSS. Disordered regions lie at residues 1 to 122 and 262 to 324; these read MDPV…KPPI and MQTP…RPPY. Low complexity predominate over residues 24 to 33; the sequence is LHLQQQQQEF. The span at 69–79 shows a compositional bias: polar residues; the sequence is NIDNIANNSGS. Residues 88-99 show a composition bias toward gly residues; sequence GGSGEGGGGSGG. The a.T hook DNA-binding region spans 105–117; the sequence is RRPRGRPAGSKNK. In terms of domain architecture, PPC spans 129–268; the sequence is ANALRTHVME…EDEMQTPVHG (140 aa). Residues 280–297 show a composition bias toward low complexity; sequence MMGQQLQHQQQAMSGHQG. Polar residues predominate over residues 304-318; the sequence is GSVQLQQQHDQSYWS.

It is found in the nucleus. Its function is as follows. Transcription factor that specifically binds AT-rich DNA sequences related to the nuclear matrix attachment regions (MARs). This Arabidopsis thaliana (Mouse-ear cress) protein is AT-hook motif nuclear-localized protein 24.